Reading from the N-terminus, the 507-residue chain is Myocyte-specific enhancer factor 2A (507 aa).

The MADS-box domain occupies 3-57 (RKKIQITRIMDERNRQVTFTKRKFGLMKKAYELSVLCDCEIALIIFNSSNKLFQY). Lys-30 is subject to Phosphoserine. Positions 58–86 (ASTDMDKVLLKYTEYNEPHESRTNSDIVE) form a DNA-binding region, mef2-type. Ser-59 carries the post-translational modification Phosphoserine; by CK2. Ser-98 is subject to Phosphoserine. Residues 173–183 (TLTDSSMLSPP) are compositionally biased toward low complexity. Positions 173 to 229 (TLTDSSMLSPPQTTLHRNVSPGAPQRPPSTGNAGGMLSTTDLTVPNGAGSSPVGNGF) are disordered. The segment covering 209–229 (LSTTDLTVPNGAGSSPVGNGF) has biased composition (polar residues). Ser-235 carries the phosphoserine modification. The segment at 243–270 (GANSLGKVMPTKSPPPPGGGNLGMNSRK) is disordered. Lys-249 carries the post-translational modification N6-acetyllysine. The residue at position 255 (Ser-255) is a Phosphoserine; by MAPK14. A required for interaction with MAPKs region spans residues 266-283 (MNSRKPDLRVVIPPSSKG). The segment at 289–296 (SEEEELEL) is beta domain. Phosphothreonine; by MAPK7 and MAPK14 is present on residues Thr-312 and Thr-319. Phosphothreonine; by NLK is present on Thr-312. Position 355 is a phosphoserine; by MAPK7 (Ser-355). The segment at 397-507 (NQNISIKSEP…KRMRMDAWVT (111 aa)) is disordered. At Lys-403 the chain carries N6-acetyllysine; alternate. Lys-403 participates in a covalent cross-link: Glycyl lysine isopeptide (Lys-Gly) (interchain with G-Cter in SUMO); alternate. At Ser-408 the chain carries Phosphoserine; by CDK5. A Phosphothreonine modification is found at Thr-415. Over residues 420-429 (QQQQQQQQQQ) the composition is skewed to low complexity. Residues 430–445 (QPPPPPQPQPQPPQPQ) are compositionally biased toward pro residues. Ser-453 is subject to Phosphoserine; by MAPK. Positions 453-466 (SPVDSLSSSSSSYD) are enriched in low complexity. Composition is skewed to basic and acidic residues over residues 467-477 (GSDREDPRGDF) and 488-507 (NTED…AWVT).

This sequence belongs to the MEF2 family. As to quaternary structure, binds DNA as a homo- or heterodimer. Dimerizes with MEF2D. Interacts with HDAC7. Interacts with PIAS1; the interaction enhances sumoylation. Interacts with HDAC4, HDAC9 and SLC2A4RG. Interacts (via the N-terminal) with MAPK7; the interaction results in the phosphorylation and transcriptional activity of MEF2A. In terms of processing, constitutive phosphorylation on Ser-408 promotes Lys-403 sumoylation thus preventing acetylation at this site. Dephosphorylation on Ser-408 by PPP3CA upon neuron depolarization promotes a switch from sumoylation to acetylation on residue Lys-403 leading to inhibition of dendrite claw differentiation. Phosphorylation on Thr-312 and Thr-319 are the main sites involved in p38 MAPK signaling and activate transcription. Phosphorylated on these sites by MAPK14/p38alpha and MAPK11/p38beta, but not by MAPK13/p38delta nor by MAPK12/p38gamma. Phosphorylation on Ser-408 by CDK5 induced by neurotoxicity inhibits MEF2A transcriptional activation leading to apoptosis of cortical neurons. Phosphorylation on Thr-312, Thr-319 and Ser-355 can be induced by EGF. Sumoylation on Lys-403 is enhanced by PIAS1 and represses transcriptional activity. Phosphorylation on Ser-408 is required for sumoylation. Has no effect on nuclear location nor on DNA binding. Sumoylated with SUMO1 and, to a lesser extent with SUMO2 and SUMO3. PIASx facilitates sumoylation in postsynaptic dendrites in the cerebellar cortex and promotes their morphogenesis. Post-translationally, acetylation on Lys-403 activates transcriptional activity. Acetylated by p300 on several sites in diffentiating myocytes. Acetylation on Lys-4 increases DNA binding and transactivation. Hyperacetylation by p300 leads to enhanced cardiac myocyte growth and heart failure. In terms of processing, proteolytically cleaved in cerebellar granule neurons on several sites by caspase 3 and caspase 7 following neurotoxicity. Preferentially cleaves the CDK5-mediated hyperphosphorylated form which leads to neuron apoptosis and transcriptional inactivation. In terms of tissue distribution, isoform MEF2 and isoform MEFA are expressed only in skeletal and cardiac muscle and in the brain. Isoform RSRFC4 and isoform RSRFC9 are expressed in all tissues examined.

It is found in the nucleus. In terms of biological role, transcriptional activator which binds specifically to the MEF2 element, 5'-YTA[AT](4)TAR-3', found in numerous muscle-specific genes. Also involved in the activation of numerous growth factor- and stress-induced genes. Mediates cellular functions not only in skeletal and cardiac muscle development, but also in neuronal differentiation and survival. Plays diverse roles in the control of cell growth, survival and apoptosis via p38 MAPK signaling in muscle-specific and/or growth factor-related transcription. In cerebellar granule neurons, phosphorylated and sumoylated MEF2A represses transcription of NUR77 promoting synaptic differentiation. Associates with chromatin to the ZNF16 promoter. The protein is Myocyte-specific enhancer factor 2A (MEF2A) of Homo sapiens (Human).